The chain runs to 827 residues: Leucine--tRNA ligase (827 aa).

Residues 42–52 carry the 'HIGH' region motif; sequence PYPSGNLHMGH. The short motif at 583–587 is the 'KMSKS' region element; the sequence is KMSKS. K586 contacts ATP.

The protein belongs to the class-I aminoacyl-tRNA synthetase family.

It localises to the cytoplasm. It carries out the reaction tRNA(Leu) + L-leucine + ATP = L-leucyl-tRNA(Leu) + AMP + diphosphate. The sequence is that of Leucine--tRNA ligase from Desulfitobacterium hafniense (strain DSM 10664 / DCB-2).